We begin with the raw amino-acid sequence, 859 residues long: Leucine--tRNA ligase (859 aa).

A 'HIGH' region motif is present at residues 42-52; sequence PYPSGRLHMGH. The 'KMSKS' region signature appears at 618–622; the sequence is KMSKS. Lysine 621 contributes to the ATP binding site.

The protein belongs to the class-I aminoacyl-tRNA synthetase family.

It localises to the cytoplasm. It catalyses the reaction tRNA(Leu) + L-leucine + ATP = L-leucyl-tRNA(Leu) + AMP + diphosphate. The chain is Leucine--tRNA ligase from Shewanella baltica (strain OS185).